A 241-amino-acid chain; its full sequence is Uridylate kinase (241 aa).

ATP is bound at residue 9 to 10 (GS). A UMP-binding site is contributed by Gly-44. ATP-binding residues include Gly-45 and Arg-49. Residues Asp-66 and 114–120 (IMPGQTT) each bind UMP. Residues Thr-140, Tyr-146, and Asp-149 each contribute to the ATP site.

The protein belongs to the UMP kinase family. In terms of assembly, homohexamer.

It localises to the cytoplasm. It catalyses the reaction UMP + ATP = UDP + ADP. It functions in the pathway pyrimidine metabolism; CTP biosynthesis via de novo pathway; UDP from UMP (UMPK route): step 1/1. Its activity is regulated as follows. Inhibited by UTP. Its function is as follows. Catalyzes the reversible phosphorylation of UMP to UDP. This is Uridylate kinase from Haloquadratum walsbyi (strain DSM 16790 / HBSQ001).